The following is a 699-amino-acid chain: Auxin response factor 10 (699 aa).

Disordered stretches follow at residues 108–136 (AAEA…DANN), 505–533 (TDLT…DDTK), and 551–595 (KNGN…SWSL). The span at 110-119 (EARREEENSR) shows a compositional bias: basic and acidic residues. Positions 125-135 (FAKTLTQSDAN) are enriched in polar residues. Residues 125–227 (FAKTLTQSDA…NIHVGLRRAK (103 aa)) constitute a DNA-binding region (TF-B3). Residues 570–593 (PNTSEGSDSGVTQGSPTKNTTPSW) are compositionally biased toward polar residues. The PB1 domain occupies 613–693 (PGQCKVFVES…RKLRILTDAG (81 aa)).

The protein belongs to the ARF family. As to quaternary structure, homodimers and heterodimers.

It localises to the nucleus. Its function is as follows. Auxin response factors (ARFs) are transcriptional factors that bind specifically to the DNA sequence 5'-TGTCTC-3' found in the auxin-responsive promoter elements (AuxREs). The polypeptide is Auxin response factor 10 (ARF10) (Oryza sativa subsp. indica (Rice)).